Here is a 640-residue protein sequence, read N- to C-terminus: tRNA-dihydrouridine(47) synthase [NAD(P)(+)]-like (640 aa).

Residues 1–10 (MAEVAEVAAE) show a composition bias toward low complexity. Disordered stretches follow at residues 1 to 22 (MAEV…VGAC) and 47 to 106 (DKQE…PHMK). Ala-2 is modified (N-acetylalanine). Basic and acidic residues predominate over residues 64–91 (PEAKRIRLEDGQENGKTEVAVESHERQV). A compositionally biased stretch (basic residues) spans 92 to 106 (PKRARGQNKSRPHMK). 2 C3H1-type zinc fingers span residues 110 to 140 (YDKE…HDVG) and 148 to 178 (ADLG…HLGP). Ser-267 carries the post-translational modification Phosphoserine. Residues 301–303 (PLT) and Gln-355 each bind FMN. The active-site Proton donor is the Cys-386. A Glycyl lysine isopeptide (Lys-Gly) (interchain with G-Cter in SUMO2) cross-link involves residue Lys-406. FMN contacts are provided by residues Lys-425, His-455, 487-489 (NGD), and 510-511 (AR).

This sequence belongs to the Dus family. Dus3 subfamily. It depends on FMN as a cofactor.

The catalysed reaction is 5,6-dihydrouridine(47) in tRNA + NAD(+) = uridine(47) in tRNA + NADH + H(+). It catalyses the reaction 5,6-dihydrouridine(47) in tRNA + NADP(+) = uridine(47) in tRNA + NADPH + H(+). It carries out the reaction a 5,6-dihydrouridine in mRNA + NAD(+) = a uridine in mRNA + NADH + H(+). The enzyme catalyses a 5,6-dihydrouridine in mRNA + NADP(+) = a uridine in mRNA + NADPH + H(+). In terms of biological role, catalyzes the synthesis of dihydrouridine, a modified base, in various RNAs, such as tRNAs, mRNAs and some long non-coding RNAs (lncRNAs). Mainly modifies the uridine in position 47 (U47) in the D-loop of most cytoplasmic tRNAs. Also able to mediate the formation of dihydrouridine in some mRNAs, thereby regulating their translation. The protein is tRNA-dihydrouridine(47) synthase [NAD(P)(+)]-like of Rattus norvegicus (Rat).